Here is a 206-residue protein sequence, read N- to C-terminus: Dephospho-CoA kinase (206 aa).

The DPCK domain occupies 4 to 200 (IVALTGGIGS…AHYLQLASQF (197 aa)). 12-17 (GSGKST) is a binding site for ATP.

Belongs to the CoaE family.

It is found in the cytoplasm. The enzyme catalyses 3'-dephospho-CoA + ATP = ADP + CoA + H(+). Its pathway is cofactor biosynthesis; coenzyme A biosynthesis; CoA from (R)-pantothenate: step 5/5. Functionally, catalyzes the phosphorylation of the 3'-hydroxyl group of dephosphocoenzyme A to form coenzyme A. This chain is Dephospho-CoA kinase, found in Shigella flexneri.